The primary structure comprises 255 residues: Hydroxyacylglutathione hydrolase (255 aa).

The Zn(2+) site is built by His55, His57, Asp59, His60, His113, Asp132, and His170.

The protein belongs to the metallo-beta-lactamase superfamily. Glyoxalase II family. Monomer. Zn(2+) serves as cofactor.

It carries out the reaction an S-(2-hydroxyacyl)glutathione + H2O = a 2-hydroxy carboxylate + glutathione + H(+). Its pathway is secondary metabolite metabolism; methylglyoxal degradation; (R)-lactate from methylglyoxal: step 2/2. Thiolesterase that catalyzes the hydrolysis of S-D-lactoyl-glutathione to form glutathione and D-lactic acid. The sequence is that of Hydroxyacylglutathione hydrolase from Methylobacterium sp. (strain 4-46).